Consider the following 304-residue polypeptide: Probable 5-dehydro-4-deoxyglucarate dehydratase (304 aa).

This sequence belongs to the DapA family.

The catalysed reaction is 5-dehydro-4-deoxy-D-glucarate + H(+) = 2,5-dioxopentanoate + CO2 + H2O. Its pathway is carbohydrate acid metabolism; D-glucarate degradation; 2,5-dioxopentanoate from D-glucarate: step 2/2. The protein is Probable 5-dehydro-4-deoxyglucarate dehydratase of Methylobacterium radiotolerans (strain ATCC 27329 / DSM 1819 / JCM 2831 / NBRC 15690 / NCIMB 10815 / 0-1).